Reading from the N-terminus, the 292-residue chain is Aquaporin-3 (292 aa).

The Cytoplasmic portion of the chain corresponds to M1 to Q24. Residues A25–S42 form a helical membrane-spanning segment. Topologically, residues V43 to F56 are extracellular. The helical transmembrane segment at L57–A74 threads the bilayer. At G75–S78 the chain is on the cytoplasmic side. The segment at residues G79–F92 is an intramembrane region (discontinuously helical). The NPA 1 motif lies at N83–A85. Topologically, residues L93–K100 are cytoplasmic. A helical membrane pass occupies residues L101–G121. The Extracellular segment spans residues L122–N159. Residue N141 is glycosylated (N-linked (GlcNAc...) asparagine). The helical transmembrane segment at G160 to A177 threads the bilayer. Over I178–G189 the chain is Cytoplasmic. Residues L190–M206 form a helical membrane-spanning segment. The Extracellular portion of the chain corresponds to G207–S210. The segment at residues G211–L224 is an intramembrane region (discontinuously helical). The NPA 2 signature appears at N215–A217. The Extracellular portion of the chain corresponds to F225 to W242. Residues W243 to M264 form a helical membrane-spanning segment. Residues I265–I292 lie on the Cytoplasmic side of the membrane.

This sequence belongs to the MIP/aquaporin (TC 1.A.8) family. Homotetramer; each monomer provides an independent glycerol/water pore. Could also exist in other oligomeric states. As to expression, detected in kidney medulla and papilla, in collecting duct cells. Detected in colon.

It is found in the cell membrane. The protein localises to the basolateral cell membrane. The catalysed reaction is glycerol(in) = glycerol(out). It catalyses the reaction H2O(in) = H2O(out). It carries out the reaction urea(in) = urea(out). The enzyme catalyses H2O2(out) = H2O2(in). Channel activity is inhibited by mercury ions. Aquaglyceroporins form homotetrameric transmembrane channels, with each monomer independently mediating glycerol and water transport across the plasma membrane along their osmotic gradient. Could also be permeable to urea. Also participates in cell permeability to H2O2 and H2O2-mediated signaling. In skin, transports glycerol to the epidermis and stratum corneum, where it maintains hydration, elasticity, and supports lipid biosynthesis for barrier repair. In kidney, contributes to the reabsorption of water, helping the body maintain proper fluid balance. The polypeptide is Aquaporin-3 (Rattus norvegicus (Rat)).